The primary structure comprises 210 residues: Proteasome subunit beta (210 aa).

The propeptide at 1–9 (MNDKNTLKG) is removed in mature form; by autocatalysis. Thr-10 acts as the Nucleophile in catalysis.

This sequence belongs to the peptidase T1B family. In terms of assembly, the 20S proteasome core is composed of 14 alpha and 14 beta subunits that assemble into four stacked heptameric rings, resulting in a barrel-shaped structure. The two inner rings, each composed of seven catalytic beta subunits, are sandwiched by two outer rings, each composed of seven alpha subunits. The catalytic chamber with the active sites is on the inside of the barrel. Has a gated structure, the ends of the cylinder being occluded by the N-termini of the alpha-subunits. Is capped at one or both ends by the proteasome regulatory ATPase, PAN.

It is found in the cytoplasm. The enzyme catalyses Cleavage of peptide bonds with very broad specificity.. With respect to regulation, the formation of the proteasomal ATPase PAN-20S proteasome complex, via the docking of the C-termini of PAN into the intersubunit pockets in the alpha-rings, triggers opening of the gate for substrate entry. Interconversion between the open-gate and close-gate conformations leads to a dynamic regulation of the 20S proteasome proteolysis activity. Component of the proteasome core, a large protease complex with broad specificity involved in protein degradation. The polypeptide is Proteasome subunit beta (Methanothermobacter thermautotrophicus (strain ATCC 29096 / DSM 1053 / JCM 10044 / NBRC 100330 / Delta H) (Methanobacterium thermoautotrophicum)).